Here is a 120-residue protein sequence, read N- to C-terminus: Galanin-like peptide (120 aa).

The N-terminal stretch at 1–22 is a signal peptide; it reads MALTVPLIVLAVLLSLMESPAS. Residues 85 to 120 constitute a propeptide that is removed on maturation; sequence SLGETFAKPDSGVTFVGVPDVVPWKRIRPGTTRFQI.

The protein belongs to the galanin family.

It localises to the secreted. Its function is as follows. Hypothalamic neuropeptide which binds to the G-protein-coupled galanin receptors (GALR1, GALR2 and GALR3). Involved in a large number of putative physiological functions in CNS homeostatic processes, including the regulation of gonadotropin-releasing hormone secretion. In Sus scrofa (Pig), this protein is Galanin-like peptide (GALP).